The following is a 417-amino-acid chain: Inactive GDSL esterase/lipase-like protein 25 (417 aa).

Residues 1–50 (MLLIPSFTANSNEPPPSKLSLSDLSMAILKSHFFLLFPLLLLHFHTVSFA) form the signal peptide. N-linked (GlcNAc...) asparagine glycans are attached at residues Asn-160, Asn-308, and Asn-311. The active site involves His-331.

It belongs to the 'GDSL' lipolytic enzyme family. Interacts with the PYK10 complex and TGG2, but not with TGG1 or PEN2. Expressed throughout the seedling, rosette leaves, roots, inflorescence and imbibed seed, but not in pollen.

The protein localises to the vacuole. It localises to the endoplasmic reticulum. Its function is as follows. Involved in organization of the endomembrane system and is required for endoplasmic reticulum morphology and organelle distribution. May act by inhibiting the formation of PYK10 complex by binding to GLL23 and exporting it from the ER. Required for proper subcellular localization of myrosinase TGG2. Has no lipase or esterase activity. In Arabidopsis thaliana (Mouse-ear cress), this protein is Inactive GDSL esterase/lipase-like protein 25 (MVP1).